The sequence spans 59 residues: Photosystem II reaction center protein K (59 aa).

A propeptide spanning residues 1–22 (MLNIFSLICLNSALYSSSFFFG) is cleaved from the precursor. Residues 30-50 (FLSPIVDFMPVIPLFFFLLAF) traverse the membrane as a helical segment.

As to quaternary structure, PSII is composed of 1 copy each of membrane proteins PsbA, PsbB, PsbC, PsbD, PsbE, PsbF, PsbH, PsbI, PsbJ, PsbK, PsbL, PsbM, PsbT, PsbX, PsbY, PsbZ, Psb30/Ycf12, at least 3 peripheral proteins of the oxygen-evolving complex and a large number of cofactors. It forms dimeric complexes. This protein, PsbL and plastoquinone-9 are found in PSII dimers but not seen in PSII monomers.

The protein localises to the plastid. Its subcellular location is the chloroplast thylakoid membrane. One of the components of the core complex of photosystem II (PSII). PSII is a light-driven water:plastoquinone oxidoreductase that uses light energy to abstract electrons from H(2)O, generating O(2) and a proton gradient subsequently used for ATP formation. It consists of a core antenna complex that captures photons, and an electron transfer chain that converts photonic excitation into a charge separation. May be involved in PSII dimerization. Its function is as follows. One of the components of the core complex of photosystem II (PSII). PSII is a light-driven water:plastoquinone oxidoreductase that uses light energy to abstract electrons from H(2)O, generating O(2) and a proton gradient subsequently used for ATP formation. It consists of a core antenna complex that captures photons, and an electron transfer chain that converts photonic excitation into a charge separation. The protein is Photosystem II reaction center protein K of Spinacia oleracea (Spinach).